The chain runs to 179 residues: MSRIGKRPIEIPSGVKVEFSDSVLTIEGPKGKLSRQVMDGVSLEITPSSIEVKRADDGLKARSAHGLTRTLVNNMVVGVTKGFERALEINGVGYRAEAKGDVLNLSLGYSHPINYALPAGIIVEVDKMTKLVVKGIDKELVGQTAAKIRSFRGPEPYKGKGIKYADEKILRKAGKTGKK.

It belongs to the universal ribosomal protein uL6 family. In terms of assembly, part of the 50S ribosomal subunit.

This protein binds to the 23S rRNA, and is important in its secondary structure. It is located near the subunit interface in the base of the L7/L12 stalk, and near the tRNA binding site of the peptidyltransferase center. The polypeptide is Large ribosomal subunit protein uL6 (Geobacter sulfurreducens (strain ATCC 51573 / DSM 12127 / PCA)).